The chain runs to 434 residues: Histidinol dehydrogenase (434 aa).

The NAD(+) site is built by Tyr130, Gln191, and Asn214. Residues Ser237, Gln259, and His262 each contribute to the substrate site. Zn(2+)-binding residues include Gln259 and His262. Residues Glu327 and His328 each act as proton acceptor in the active site. Substrate is bound by residues His328, Asp361, Glu415, and His420. Asp361 contributes to the Zn(2+) binding site. His420 contributes to the Zn(2+) binding site.

This sequence belongs to the histidinol dehydrogenase family. Zn(2+) serves as cofactor.

The enzyme catalyses L-histidinol + 2 NAD(+) + H2O = L-histidine + 2 NADH + 3 H(+). The protein operates within amino-acid biosynthesis; L-histidine biosynthesis; L-histidine from 5-phospho-alpha-D-ribose 1-diphosphate: step 9/9. Functionally, catalyzes the sequential NAD-dependent oxidations of L-histidinol to L-histidinaldehyde and then to L-histidine. This is Histidinol dehydrogenase from Chromobacterium violaceum (strain ATCC 12472 / DSM 30191 / JCM 1249 / CCUG 213 / NBRC 12614 / NCIMB 9131 / NCTC 9757 / MK).